The sequence spans 461 residues: Probable tubulin polyglutamylase TTLL9 (461 aa).

Positions 1 to 21 (MSRPKNQNYKGHGLQKGKERE) are disordered. The 381-residue stretch at 22 to 402 (QRASIRFKTT…EARLTGREKR (381 aa)) folds into the TTL domain. Residues Lys149 and 155–156 (QG) contribute to the ATP site. An a protein-binding site is contributed by Gln155. Positions 182-208 (SLEAQPARNTVNPSGSHDTRSSDDQKD) are disordered. Residues 188–197 (ARNTVNPSGS) show a composition bias toward polar residues. The segment covering 198-208 (HDTRSSDDQKD) has biased composition (basic and acidic residues). ATP-binding positions include 218-221 (QRYI) and 231-233 (KFD). L-glutamate is bound at residue Arg257. Residue 276–277 (TN) participates in ATP binding. Lys294 lines the L-glutamate pocket. 3 residues coordinate Mg(2+): Asp348, Glu361, and Asn363. Lys379 lines the L-glutamate pocket.

This sequence belongs to the tubulin--tyrosine ligase family. Requires Mg(2+) as cofactor.

The protein localises to the cytoplasm. It localises to the cytoskeleton. It is found in the cilium basal body. Its subcellular location is the flagellum axoneme. It catalyses the reaction (L-glutamyl)(n)-gamma-L-glutamyl-L-glutamyl-[protein] + L-glutamate + ATP = (L-glutamyl)(n+1)-gamma-L-glutamyl-L-glutamyl-[protein] + ADP + phosphate + H(+). In terms of biological role, probable tubulin polyglutamylase that generates side chains of glutamate on the gamma-carboxyl group of specific glutamate residues within the C-terminal tail of target proteins. Similar to TTLL1, may acquire enzymatic activity only in complex with other proteins as it is most likely lacking domains important for autonomous activity. Mediates tubulin polyglutamylation which induces establishment of microtubule heterogeneity in sperm flagella, thereby playing a role in normal motile flagella axoneme structure and sperm flagella beating pattern. This is Probable tubulin polyglutamylase TTLL9 (TTLL9) from Bos taurus (Bovine).